The chain runs to 342 residues: Eukaryotic translation initiation factor 3 subunit F (342 aa).

Residues 30–166 (VAIQPQAVFS…SRTYISAPIG (137 aa)) enclose the MPN domain. A disordered region spans residues 310-342 (TDALAGDGQKDGGDRKQGGDRRNKGRQQRTQEA). Basic and acidic residues predominate over residues 317–331 (GQKDGGDRKQGGDRR).

Belongs to the eIF-3 subunit F family. Component of the eukaryotic translation initiation factor 3 (eIF-3) complex.

It is found in the cytoplasm. Its function is as follows. Component of the eukaryotic translation initiation factor 3 (eIF-3) complex, which is involved in protein synthesis of a specialized repertoire of mRNAs and, together with other initiation factors, stimulates binding of mRNA and methionyl-tRNAi to the 40S ribosome. The eIF-3 complex specifically targets and initiates translation of a subset of mRNAs involved in cell proliferation. This is Eukaryotic translation initiation factor 3 subunit F from Phaeosphaeria nodorum (strain SN15 / ATCC MYA-4574 / FGSC 10173) (Glume blotch fungus).